Here is a 339-residue protein sequence, read N- to C-terminus: Serine racemase (339 aa).

ATP-binding residues include Ser-43 and Lys-63. Lys-68 (proton acceptor) is an active-site residue. N6-(pyridoxal phosphate)lysine is present on Lys-68. Residue Thr-90 participates in Ca(2+) binding. Ser-93 functions as the Proton acceptor in the catalytic mechanism. Asn-95 contacts pyridoxal 5'-phosphate. Residue Cys-122 is modified to S-nitrosocysteine. Tyr-130 is an ATP binding site. A Mg(2+)-binding site is contributed by Asp-187. Residues Gly-195, Gly-196, and Gly-197 each coordinate pyridoxal 5'-phosphate. Residues Glu-219, Ala-223, and Asp-225 each contribute to the Ca(2+) site. Positions 219, 223, and 225 each coordinate Mg(2+). Mn(2+)-binding residues include Glu-219, Ala-223, and Asp-225. Lys-287 contacts ATP. A pyridoxal 5'-phosphate-binding site is contributed by Ser-323. Asn-326 contributes to the ATP binding site.

Belongs to the serine/threonine dehydratase family. Requires Mg(2+) as cofactor. Mn(2+) serves as cofactor. The cofactor is Ca(2+). It depends on pyridoxal 5'-phosphate as a cofactor.

It carries out the reaction L-serine = D-serine. The enzyme catalyses L-serine = pyruvate + NH4(+). It catalyses the reaction D-serine = pyruvate + NH4(+). Functionally, catalyzes the synthesis of D-serine from L-serine. Has dehydratase activity towards both L-serine and D-serine. The protein is Serine racemase of Oryza sativa subsp. indica (Rice).